The sequence spans 357 residues: Probable cinnamyl alcohol dehydrogenase 2 (357 aa).

Position 47 (C47) interacts with Zn(2+). Residue S49 coordinates NADP(+). Residues H69, E70, C100, C103, C106, C114, and C163 each contribute to the Zn(2+) site. NADP(+)-binding positions include T167, 188–193, 211–216, T251, G275, and 298–300; these read GLGGVG, SSSDKK, and SFI.

It belongs to the zinc-containing alcohol dehydrogenase family. In terms of assembly, homodimer. Requires Zn(2+) as cofactor.

The catalysed reaction is (E)-cinnamyl alcohol + NADP(+) = (E)-cinnamaldehyde + NADPH + H(+). It carries out the reaction (E)-coniferol + NADP(+) = (E)-coniferaldehyde + NADPH + H(+). It catalyses the reaction (E)-sinapyl alcohol + NADP(+) = (E)-sinapaldehyde + NADPH + H(+). The enzyme catalyses (E)-4-coumaroyl alcohol + NADP(+) = (E)-4-coumaraldehyde + NADPH + H(+). The catalysed reaction is (E)-caffeyl alcohol + NADP(+) = (E)-caffeyl aldehyde + NADPH + H(+). It participates in aromatic compound metabolism; phenylpropanoid biosynthesis. Its function is as follows. Involved in lignin biosynthesis. Catalyzes the final step specific for the production of lignin monomers. Catalyzes the NADPH-dependent reduction of coniferaldehyde, 5-hydroxyconiferaldehyde, sinapaldehyde, 4-coumaraldehyde and caffeyl aldehyde to their respective alcohols. In Picea abies (Norway spruce), this protein is Probable cinnamyl alcohol dehydrogenase 2 (CAD2).